A 308-amino-acid chain; its full sequence is Maspardin (308 aa).

The region spanning 87–159 (FCDGFRKLLD…NSFWLMPAFM (73 aa)) is the AB hydrolase-1 domain.

Belongs to the AB hydrolase superfamily. In terms of assembly, interacts with CD4. Interacts with ALDH16A1.

Its subcellular location is the cytoplasm. Functionally, may play a role as a negative regulatory factor in CD4-dependent T-cell activation. This is Maspardin (SPG21) from Macaca fascicularis (Crab-eating macaque).